A 155-amino-acid polypeptide reads, in one-letter code: Large ribosomal subunit protein uL22 (155 aa).

Belongs to the universal ribosomal protein uL22 family. Part of the 50S ribosomal subunit.

In terms of biological role, this protein binds specifically to 23S rRNA. It makes multiple contacts with different domains of the 23S rRNA in the assembled 50S subunit and ribosome. Functionally, the globular domain of the protein is located near the polypeptide exit tunnel on the outside of the subunit, while an extended beta-hairpin is found that lines the wall of the exit tunnel in the center of the 70S ribosome. The chain is Large ribosomal subunit protein uL22 from Archaeoglobus fulgidus (strain ATCC 49558 / DSM 4304 / JCM 9628 / NBRC 100126 / VC-16).